Reading from the N-terminus, the 25-residue chain is Snaclec bothroalternin subunit alpha/beta (25 aa).

Residues 1-25 (DCPSDWSNHEGHCYRVFNEWMNWAD) enclose the C-type lectin domain. Cys2 and Cys13 form a disulfide bridge.

Belongs to the snaclec family. Heterodimer of subunits alpha and beta; disulfide-linked. As to expression, expressed by the venom gland.

It is found in the secreted. Its function is as follows. Thrombin (F2) inhibitor that inhibits aggregation of rabbit platelets induced by alpha-thrombin. This chain is Snaclec bothroalternin subunit alpha/beta, found in Bothrops alternatus (Urutu).